Consider the following 595-residue polypeptide: MFS-type efflux pump MFS2 (595 aa).

N62 is a glycosylation site (N-linked (GlcNAc...) asparagine). 12 helical membrane passes run W69–Y89, V106–A126, L136–P156, F166–M186, G197–L217, W225–L245, P301–F321, P336–I356, L381–T401, I409–L429, A442–F462, and I478–A498.

Belongs to the major facilitator superfamily. DHA1 family. Polyamines/proton antiporter (TC 2.A.1.2.16) subfamily.

The protein localises to the cell membrane. Its function is as follows. MFS-type efflux pump involved in the modulation susceptibility to fluconazole and voriconazole, 2 azoles with similar molecular structure. The polypeptide is MFS-type efflux pump MFS2 (Trichophyton rubrum (strain ATCC MYA-4607 / CBS 118892) (Athlete's foot fungus)).